The primary structure comprises 396 residues: Elongation factor Tu (396 aa).

Positions 10–205 constitute a tr-type G domain; the sequence is KSHANIGTIG…AVDEYIPTPE (196 aa). The interval 19–26 is G1; it reads GHVDHGKT. Residue 19–26 coordinates GTP; the sequence is GHVDHGKT. Thr-26 lines the Mg(2+) pocket. The interval 61-65 is G2; that stretch reads GITIS. Positions 82–85 are G3; sequence DCPG. GTP is bound by residues 82–86 and 137–140; these read DCPGH and NKCD. Positions 137–140 are G4; it reads NKCD. Residues 175-177 form a G5 region; sequence SAL.

It belongs to the TRAFAC class translation factor GTPase superfamily. Classic translation factor GTPase family. EF-Tu/EF-1A subfamily. In terms of assembly, monomer.

It localises to the cytoplasm. The catalysed reaction is GTP + H2O = GDP + phosphate + H(+). Functionally, GTP hydrolase that promotes the GTP-dependent binding of aminoacyl-tRNA to the A-site of ribosomes during protein biosynthesis. The sequence is that of Elongation factor Tu from Bacillus velezensis (strain DSM 23117 / BGSC 10A6 / LMG 26770 / FZB42) (Bacillus amyloliquefaciens subsp. plantarum).